The chain runs to 368 residues: 2-aminoethylphosphonate--pyruvate transaminase (368 aa).

N6-(pyridoxal phosphate)lysine is present on K192.

Belongs to the class-V pyridoxal-phosphate-dependent aminotransferase family. PhnW subfamily. In terms of assembly, homodimer. Requires pyridoxal 5'-phosphate as cofactor.

It catalyses the reaction (2-aminoethyl)phosphonate + pyruvate = phosphonoacetaldehyde + L-alanine. In terms of biological role, involved in phosphonate degradation. The chain is 2-aminoethylphosphonate--pyruvate transaminase from Pseudomonas putida (strain W619).